Consider the following 46-residue polypeptide: Defensin-like protein AX1 (46 aa).

Disulfide bonds link cysteine 3/cysteine 46, cysteine 14/cysteine 34, cysteine 20/cysteine 40, and cysteine 24/cysteine 42.

In terms of tissue distribution, leaves and flowers.

In terms of biological role, strong inhibiting activity against C.beticola and other filamentous fungi. Little or no effect against bacteria. This Beta vulgaris (Sugar beet) protein is Defensin-like protein AX1.